A 518-amino-acid polypeptide reads, in one-letter code: Cytochrome P450 82E3 (518 aa).

The chain crosses the membrane as a helical span at residues 2 to 22 (VFPVEAIVGLVTFTFLFYFLW). K254 is covalently cross-linked (Glycyl lysine isopeptide (Lys-Gly) (interchain with G-Cter in ubiquitin)). C458 contributes to the heme binding site.

Belongs to the cytochrome P450 family. CYP82E2 subfamily. Heme serves as cofactor. Expressed at low levels in green leaves.

It localises to the membrane. It participates in alkaloid biosynthesis; nicotine biosynthesis. Functionally, no nicotine N-demethylase activity. This Nicotiana tabacum (Common tobacco) protein is Cytochrome P450 82E3.